Here is a 370-residue protein sequence, read N- to C-terminus: Phosphoserine aminotransferase (370 aa).

At M1 the chain carries N-acetylmethionine. Residues H44 and R45 each coordinate O-phospho-L-serine. N6-acetyllysine is present on K51. Pyridoxal 5'-phosphate-binding residues include G79, C80, and W107. An N6-acetyllysine modification is found at K127. Pyridoxal 5'-phosphate-binding residues include T156, D176, and Q199. K200 is modified (N6-(pyridoxal phosphate)lysine). Positions 241 and 242 each coordinate pyridoxal 5'-phosphate. 3 positions are modified to N6-acetyllysine: K269, K318, and K323. S331 carries the post-translational modification Phosphoserine. N6-acetyllysine is present on K333. Residues H335, R336, and R342 each contribute to the O-phospho-L-serine site.

Belongs to the class-V pyridoxal-phosphate-dependent aminotransferase family. SerC subfamily. In terms of assembly, homodimer. Pyridoxal 5'-phosphate is required as a cofactor.

The enzyme catalyses O-phospho-L-serine + 2-oxoglutarate = 3-phosphooxypyruvate + L-glutamate. It participates in amino-acid biosynthesis; L-serine biosynthesis; L-serine from 3-phospho-D-glycerate: step 2/3. Its function is as follows. Involved in L-serine biosynthesis via the phosphorylated pathway, a three-step pathway converting the glycolytic intermediate 3-phospho-D-glycerate into L-serine. Catalyzes the second step, that is the pyridoxal 5'-phosphate-dependent transamination of 3-phosphohydroxypyruvate and L-glutamate to O-phosphoserine (OPS) and alpha-ketoglutarate. This chain is Phosphoserine aminotransferase (PSAT1), found in Oryctolagus cuniculus (Rabbit).